The chain runs to 480 residues: Proline--tRNA ligase (480 aa).

It belongs to the class-II aminoacyl-tRNA synthetase family. ProS type 3 subfamily. In terms of assembly, homodimer.

Its subcellular location is the cytoplasm. It carries out the reaction tRNA(Pro) + L-proline + ATP = L-prolyl-tRNA(Pro) + AMP + diphosphate. Catalyzes the attachment of proline to tRNA(Pro) in a two-step reaction: proline is first activated by ATP to form Pro-AMP and then transferred to the acceptor end of tRNA(Pro). In Methanosarcina mazei (strain ATCC BAA-159 / DSM 3647 / Goe1 / Go1 / JCM 11833 / OCM 88) (Methanosarcina frisia), this protein is Proline--tRNA ligase.